A 518-amino-acid polypeptide reads, in one-letter code: Membrane-bound lytic murein transglycosylase F (518 aa).

The signal sequence occupies residues 1-21 (MKKLKINYLFIGILALLLAVA). A non-LT domain region spans residues 22 to 269 (LWPSIPWFGK…RIEEKYLGHG (248 aa)). Residues 270 to 518 (DDFDYVDTRT…SRKGSEEKQN (249 aa)) form an LT domain region. Glu-314 is a catalytic residue.

In the N-terminal section; belongs to the bacterial solute-binding protein 3 family. This sequence in the C-terminal section; belongs to the transglycosylase Slt family.

The protein resides in the cell outer membrane. The enzyme catalyses Exolytic cleavage of the (1-&gt;4)-beta-glycosidic linkage between N-acetylmuramic acid (MurNAc) and N-acetylglucosamine (GlcNAc) residues in peptidoglycan, from either the reducing or the non-reducing ends of the peptidoglycan chains, with concomitant formation of a 1,6-anhydrobond in the MurNAc residue.. Murein-degrading enzyme that degrades murein glycan strands and insoluble, high-molecular weight murein sacculi, with the concomitant formation of a 1,6-anhydromuramoyl product. Lytic transglycosylases (LTs) play an integral role in the metabolism of the peptidoglycan (PG) sacculus. Their lytic action creates space within the PG sacculus to allow for its expansion as well as for the insertion of various structures such as secretion systems and flagella. This Shigella dysenteriae serotype 1 (strain Sd197) protein is Membrane-bound lytic murein transglycosylase F.